The chain runs to 358 residues: Peptide chain release factor 1 (358 aa).

N5-methylglutamine is present on Gln233.

The protein belongs to the prokaryotic/mitochondrial release factor family. Methylated by PrmC. Methylation increases the termination efficiency of RF1.

It is found in the cytoplasm. Functionally, peptide chain release factor 1 directs the termination of translation in response to the peptide chain termination codons UAG and UAA. The polypeptide is Peptide chain release factor 1 (Geobacillus sp. (strain WCH70)).